The sequence spans 64 residues: Alpha-conotoxin-like Ac1.1a (64 aa).

Positions 1–21 (MGMRMMFTLFLLVVLTTTVVS) are cleaved as a signal peptide. Positions 22–47 (YPSDSASDGRDDEAKDERSDMYELKR) are excised as a propeptide. Intrachain disulfides connect Cys51-Cys56 and Cys52-Cys62. Cys62 bears the Cysteine amide mark.

It belongs to the conotoxin A superfamily. In terms of tissue distribution, expressed by the venom duct.

It is found in the secreted. Alpha-conotoxins act on postsynaptic membranes, they bind to the nicotinic acetylcholine receptors (nAChR) and thus inhibit them. The polypeptide is Alpha-conotoxin-like Ac1.1a (Conus achatinus (Little frog cone)).